A 204-amino-acid chain; its full sequence is Carbon disulfide hydrolase (204 aa).

The Zn(2+) site is built by cysteine 35, histidine 88, and cysteine 91.

The protein belongs to the beta-class carbonic anhydrase family. As to quaternary structure, forms a hexadecameric catenane homooligomer, through interactions of two interlocked octameric rings. The cofactor is Zn(2+).

It catalyses the reaction carbon disulfide + 2 H2O = 2 hydrogen sulfide + CO2 + 2 H(+). It participates in sulfur metabolism; hydrogen sulfide biosynthesis. In terms of biological role, catalyzes the conversion of carbon disulfide into hydrogen sulfide and carbon dioxide, with carbonyl sulfide as an intermediate. Likely plays a key role in sulfur metabolism in S.solfataricus. Does not show carbonic anhydrase activity (hydration of CO(2) to carbonate). The chain is Carbon disulfide hydrolase from Saccharolobus solfataricus (strain ATCC 35092 / DSM 1617 / JCM 11322 / P2) (Sulfolobus solfataricus).